A 468-amino-acid chain; its full sequence is O-methyltransferase lcsG (468 aa).

A compositionally biased stretch (polar residues) spans 1-12 (MGDNVQSDTTAA). The tract at residues 1–29 (MGDNVQSDTTAAQAGITDAPTAPTSAPVS) is disordered. S-adenosyl-L-methionine-binding positions include 298 to 299 (GG), aspartate 321, 348 to 349 (DF), and lysine 363.

It belongs to the class I-like SAM-binding methyltransferase superfamily. Cation-independent O-methyltransferase family.

It participates in secondary metabolite biosynthesis. In terms of biological role, O-methyltransferase; part of the gene cluster that mediates the biosynthesis of the lipopeptide antibiotics leucinostatins that show extensive biological activities, including antimalarial, antiviral, antibacterial, antifungal, and antitumor activities, as well as phytotoxic. Leucinostatin A contains nine amino acid residues, including the unusual amino acid 4-methyl-L-proline (MePro), 2-amino-6-hydroxy-4-methyl-8-oxodecanoic acid (AHyMeOA), 3-hydroxyleucine (HyLeu), alpha-aminoisobutyric acid (AIB), beta-Ala, a 4-methylhex-2-enoic acid at the N-terminus as well as a N1,N1-dimethylpropane-1,2-diamine (DPD) at the C-terminus. The biosynthesis of leucinostatins is probably initiated with the assembly of 4-methylhex-2-enoic acid by a reducing PKS. Two reducing polyketide synthases, lcsB and lcsC, have been identified in the cluster and it is not clear which is the one that assembles 4-methylhex-2-enoic acid since both contain KS, AT, DH, cMT, ER, KR and ACP domains. The polyketide residue might be transferred to the NRPS lcsA, mediated by two additional enzymes, the acyl-CoA ligase lcsD and the thioesterase lcsE. The linear polyketide carboxylic acid, which is released from PKS, is converted to a CoA thioester by lcsD, and then lcsE hydrolyzes the thiol bond and shuttles the polyketide intermediate to lcsA. The C domain of the first module catalyzed the condensation of 4-methylhex-2-enoic acid and MePro carried by domain A1, followed by successive condensations of nine amino acids to trigger the elongation of the linear peptide. A5 and A6 domains of lcsA are proposed to incorporate leucine, A2 AHyMeOA, and A3 incorporates HyLeu. A4, A7 and A8 incorporate AIB. The AHyMeOA in leucinostatin A activated by the A2 might be produced by the second PKS (lcsB or lcsC) present within the cluster. The MePro is probably produced via leucine cyclization and may originate from a separate pathway, independent of the cluster. Another nonproteinogenic amino acid, beta-Ala, could be produced by an aspartic acid decarboxylase also localized outside of the cluster. Two candidates are VFPBJ_01400 and VFPBJ_10476. The final peptide scaffold may be released by the NAD(P)H-dependent thioester reductase (TE) at the C-terminal region of lcsA. Transamination of the lcsA product by the transaminase lcsP may produce DPD at the C-terminus. Further hydroxylation steps performed alternatively by the cytochrome P450 monooxygenases lcsI, lcsK and lcsN then yield the non-methylated leucinostatins precursor. It is also possible that leucines can be hydroxylated prior to their incorporation into the peptide. Varying extents of methylation then lead to the formation of leucinostatins A and B. This Purpureocillium lilacinum (Paecilomyces lilacinus) protein is O-methyltransferase lcsG.